Here is a 317-residue protein sequence, read N- to C-terminus: Secreted mono- and diacylglycerol lipase 3 (317 aa).

The signal sequence occupies residues 1–29 (MMFADDLVRMAVLRFITVALAAITNVANA). A disulfide bridge connects residues Cys-61 and Cys-310. Asn-108 is a glycosylation site (N-linked (GlcNAc...) asparagine). Catalysis depends on Ser-175, which acts as the Nucleophile. A glycan (N-linked (GlcNAc...) asparagine) is linked at Asn-194. Asp-234 is an active-site residue. The N-linked (GlcNAc...) asparagine glycan is linked to Asn-258. His-294 is an active-site residue.

This sequence belongs to the AB hydrolase superfamily. Lipase family. Class 3 subfamily.

Its subcellular location is the secreted. The enzyme catalyses a monoacylglycerol + H2O = glycerol + a fatty acid + H(+). The catalysed reaction is a diacylglycerol + H2O = a monoacylglycerol + a fatty acid + H(+). Functionally, secreted mono- and diacylglycerol lipase involved in plant virulence. Has a substrate preference for p-nitrophenyl esters with a carbon chain length of C10 (p-nitrophenyl caprate). This is Secreted mono- and diacylglycerol lipase 3 from Gibberella zeae (strain ATCC MYA-4620 / CBS 123657 / FGSC 9075 / NRRL 31084 / PH-1) (Wheat head blight fungus).